An 84-amino-acid polypeptide reads, in one-letter code: Small ribosomal subunit protein bS16 (84 aa).

It belongs to the bacterial ribosomal protein bS16 family.

This Delftia acidovorans (strain DSM 14801 / SPH-1) protein is Small ribosomal subunit protein bS16.